A 262-amino-acid polypeptide reads, in one-letter code: MWFLVLCLALSLGGTGAAPPIQSRIVGGWECEQHSQPWQAALYHFSTFQCGGILVHRQWVLTAAHCISDNYQLWLGRHNLFDDENTAQFVHVSESFPHPGFNMSLLENHTRQADEDYSHDLMLLRLTEPADTITDAVKVVELPTEEPEVGSTCLASGWGSIEPENFSFPDDLQCVDLKILPNDECKKAHVQKVTDFMLCVGHLEGGKDTCVGDSGGPLMCDGVLQGVTSWGYVPCGTPNKPSVAVRVLSYVKWIEDTIAENS.

The signal sequence occupies residues 1–18 (MWFLVLCLALSLGGTGAA). Residues 19–24 (PPIQSR) constitute a propeptide, activation peptide. In terms of domain architecture, Peptidase S1 spans 25–259 (IVGGWECEQH…YVKWIEDTIA (235 aa)). Disulfide bonds link C31–C174, C50–C66, C153–C220, C185–C199, and C210–C235. H65 acts as the Charge relay system in catalysis. S93 is a glycosylation site (O-linked (GalNAc...) serine). A glycan (N-linked (GlcNAc...) asparagine) is linked at N102. S104 carries an O-linked (GalNAc...) serine glycan. A glycan (N-linked (GlcNAc...) asparagine) is linked at N108. D120 serves as the catalytic Charge relay system. N-linked (GlcNAc...) asparagine; partial glycosylation is present at N165. An O-linked (GalNAc...) serine glycan is attached at S167. S214 (charge relay system) is an active-site residue.

It belongs to the peptidase S1 family. Kallikrein subfamily. The O-linked polysaccharides on Ser-93, Ser-104 and Ser-167 are probably the mucin type linked to GalNAc. In PubMed:3163150, GalNAc was detected with the corresponding peptides but not located. Isoform 2 is expressed in pancreas, salivary glands, kidney, colon, prostate gland, testis, spleen and the colon adenocarcinoma cell line T84.

It carries out the reaction Preferential cleavage of Arg-|-Xaa bonds in small molecule substrates. Highly selective action to release kallidin (lysyl-bradykinin) from kininogen involves hydrolysis of Met-|-Xaa or Leu-|-Xaa.. Its function is as follows. Glandular kallikreins cleave Met-Lys and Arg-Ser bonds in kininogen to release Lys-bradykinin. (Microbial infection) Cleaves Neisseria meningitidis NHBA in saliva; Neisseria is an obligate commensal of the nasopharyngeal mucosa. The chain is Kallikrein-1 (KLK1) from Homo sapiens (Human).